Reading from the N-terminus, the 506-residue chain is Probable Xaa-Pro aminopeptidase BDCG_04966 (506 aa).

Residues D285, D296, E433, and E471 each contribute to the Mn(2+) site.

The protein belongs to the peptidase M24B family. Requires Mn(2+) as cofactor.

The catalysed reaction is Release of any N-terminal amino acid, including proline, that is linked to proline, even from a dipeptide or tripeptide.. In terms of biological role, catalyzes the removal of a penultimate prolyl residue from the N-termini of peptides. In Ajellomyces dermatitidis (strain ER-3 / ATCC MYA-2586) (Blastomyces dermatitidis), this protein is Probable Xaa-Pro aminopeptidase BDCG_04966.